The chain runs to 410 residues: Serine hydroxymethyltransferase (410 aa).

(6S)-5,6,7,8-tetrahydrofolate contacts are provided by residues L119 and 123-125 (GHL). The residue at position 228 (K228) is an N6-(pyridoxal phosphate)lysine. Residue 351 to 353 (SPF) participates in (6S)-5,6,7,8-tetrahydrofolate binding.

This sequence belongs to the SHMT family. Homodimer. Requires pyridoxal 5'-phosphate as cofactor.

It localises to the cytoplasm. It carries out the reaction (6R)-5,10-methylene-5,6,7,8-tetrahydrofolate + glycine + H2O = (6S)-5,6,7,8-tetrahydrofolate + L-serine. Its pathway is one-carbon metabolism; tetrahydrofolate interconversion. It participates in amino-acid biosynthesis; glycine biosynthesis; glycine from L-serine: step 1/1. Catalyzes the reversible interconversion of serine and glycine with tetrahydrofolate (THF) serving as the one-carbon carrier. This reaction serves as the major source of one-carbon groups required for the biosynthesis of purines, thymidylate, methionine, and other important biomolecules. Also exhibits THF-independent aldolase activity toward beta-hydroxyamino acids, producing glycine and aldehydes, via a retro-aldol mechanism. This chain is Serine hydroxymethyltransferase, found in Alkaliphilus oremlandii (strain OhILAs) (Clostridium oremlandii (strain OhILAs)).